Here is a 186-residue protein sequence, read N- to C-terminus: GTP cyclohydrolase 1 1 (186 aa).

It belongs to the GTP cyclohydrolase I family. As to quaternary structure, homomer.

The catalysed reaction is GTP + H2O = 7,8-dihydroneopterin 3'-triphosphate + formate + H(+). It functions in the pathway cofactor biosynthesis; 7,8-dihydroneopterin triphosphate biosynthesis; 7,8-dihydroneopterin triphosphate from GTP: step 1/1. In Pseudomonas aeruginosa (strain ATCC 15692 / DSM 22644 / CIP 104116 / JCM 14847 / LMG 12228 / 1C / PRS 101 / PAO1), this protein is GTP cyclohydrolase 1 1 (folE1).